Here is a 346-residue protein sequence, read N- to C-terminus: Probable galacturonosyltransferase-like 6 (346 aa).

Residues 1–21 (MLWITRFAGLFSAAMAVIVLS) form a helical; Signal-anchor for type II membrane protein membrane-spanning segment. At 22-346 (PSLQSFPPAA…TPYDLYRHSH (325 aa)) the chain is on the lumenal side. Asn203 carries N-linked (GlcNAc...) asparagine glycosylation.

It belongs to the glycosyltransferase 8 family.

It localises to the golgi apparatus membrane. It participates in glycan metabolism; pectin biosynthesis. In terms of biological role, may be involved in pectin and/or xylans biosynthesis in cell walls. In Arabidopsis thaliana (Mouse-ear cress), this protein is Probable galacturonosyltransferase-like 6 (GATL6).